Here is a 315-residue protein sequence, read N- to C-terminus: Aspartate carbamoyltransferase catalytic subunit (315 aa).

Residues Arg65 and Thr66 each coordinate carbamoyl phosphate. Lys93 contacts L-aspartate. Carbamoyl phosphate contacts are provided by Arg115, His145, and Gln148. Arg179 and Arg234 together coordinate L-aspartate. 2 residues coordinate carbamoyl phosphate: Gly275 and Pro276.

It belongs to the aspartate/ornithine carbamoyltransferase superfamily. ATCase family. Heterododecamer (2C3:3R2) of six catalytic PyrB chains organized as two trimers (C3), and six regulatory PyrI chains organized as three dimers (R2).

It carries out the reaction carbamoyl phosphate + L-aspartate = N-carbamoyl-L-aspartate + phosphate + H(+). It functions in the pathway pyrimidine metabolism; UMP biosynthesis via de novo pathway; (S)-dihydroorotate from bicarbonate: step 2/3. Catalyzes the condensation of carbamoyl phosphate and aspartate to form carbamoyl aspartate and inorganic phosphate, the committed step in the de novo pyrimidine nucleotide biosynthesis pathway. In Xanthomonas campestris pv. campestris (strain 8004), this protein is Aspartate carbamoyltransferase catalytic subunit.